The sequence spans 639 residues: uncharacterized protein (639 aa).

An N-terminal signal peptide occupies residues 1-16 (MLTLYLFTATCCFVCA). 2 disordered regions span residues 80-128 (RRRA…SDKL) and 432-488 (QTAT…TSRT). Polar residues-rich tracts occupy residues 108–122 (TYAT…TASP) and 432–446 (QTAT…QQQP). Basic and acidic residues predominate over residues 465 to 480 (HGDEPHSDGELRRESH).

This is an uncharacterized protein from Human cytomegalovirus (strain Merlin) (HHV-5).